The sequence spans 193 residues: Shikimate kinase (193 aa).

31 to 36 serves as a coordination point for ATP; the sequence is GVGKTT. Thr35 contributes to the Mg(2+) binding site. Substrate-binding residues include Asp53, Arg77, and Gly103. Arg141 provides a ligand contact to ATP. Arg160 contacts substrate. Gln176 is an ATP binding site.

The protein belongs to the shikimate kinase family. Monomer. Mg(2+) is required as a cofactor.

The protein resides in the cytoplasm. The catalysed reaction is shikimate + ATP = 3-phosphoshikimate + ADP + H(+). Its pathway is metabolic intermediate biosynthesis; chorismate biosynthesis; chorismate from D-erythrose 4-phosphate and phosphoenolpyruvate: step 5/7. In terms of biological role, catalyzes the specific phosphorylation of the 3-hydroxyl group of shikimic acid using ATP as a cosubstrate. The polypeptide is Shikimate kinase (Novosphingobium aromaticivorans (strain ATCC 700278 / DSM 12444 / CCUG 56034 / CIP 105152 / NBRC 16084 / F199)).